Reading from the N-terminus, the 301-residue chain is Homeobox protein knotted-1-like 1 (301 aa).

Positions C141–E170 are disordered. The segment covering A144–T153 has biased composition (low complexity). Residues E188–F208 form the ELK domain. The segment at residues L209–S272 is a DNA-binding region (homeobox; TALE-type).

This sequence belongs to the TALE/KNOX homeobox family.

The protein localises to the nucleus. Probable transcription factor that may be involved in shoot formation during early embryogenesis. The chain is Homeobox protein knotted-1-like 1 (OSH6) from Oryza sativa subsp. japonica (Rice).